The primary structure comprises 358 residues: tRNA-specific 2-thiouridylase MnmA (358 aa).

ATP is bound by residues 6–13 (ALSGGVDS) and Met32. Cys103 functions as the Nucleophile in the catalytic mechanism. A disulfide bridge links Cys103 with Cys201. Gly127 is a binding site for ATP. Residues 151–153 (KDQ) are interaction with tRNA. Catalysis depends on Cys201, which acts as the Cysteine persulfide intermediate.

This sequence belongs to the MnmA/TRMU family.

Its subcellular location is the cytoplasm. It catalyses the reaction S-sulfanyl-L-cysteinyl-[protein] + uridine(34) in tRNA + AH2 + ATP = 2-thiouridine(34) in tRNA + L-cysteinyl-[protein] + A + AMP + diphosphate + H(+). Catalyzes the 2-thiolation of uridine at the wobble position (U34) of tRNA, leading to the formation of s(2)U34. The chain is tRNA-specific 2-thiouridylase MnmA from Thermotoga maritima (strain ATCC 43589 / DSM 3109 / JCM 10099 / NBRC 100826 / MSB8).